A 147-amino-acid chain; its full sequence is D-aminoacyl-tRNA deacylase (147 aa).

A Gly-cisPro motif, important for rejection of L-amino acids motif is present at residues 136 to 137 (GP).

It belongs to the DTD family. Homodimer.

The protein localises to the cytoplasm. The catalysed reaction is glycyl-tRNA(Ala) + H2O = tRNA(Ala) + glycine + H(+). It carries out the reaction a D-aminoacyl-tRNA + H2O = a tRNA + a D-alpha-amino acid + H(+). Functionally, an aminoacyl-tRNA editing enzyme that deacylates mischarged D-aminoacyl-tRNAs. Also deacylates mischarged glycyl-tRNA(Ala), protecting cells against glycine mischarging by AlaRS. Acts via tRNA-based rather than protein-based catalysis; rejects L-amino acids rather than detecting D-amino acids in the active site. By recycling D-aminoacyl-tRNA to D-amino acids and free tRNA molecules, this enzyme counteracts the toxicity associated with the formation of D-aminoacyl-tRNA entities in vivo and helps enforce protein L-homochirality. The protein is D-aminoacyl-tRNA deacylase of Streptococcus uberis (strain ATCC BAA-854 / 0140J).